Reading from the N-terminus, the 119-residue chain is Ethylene-responsive proteinase inhibitor 1 (119 aa).

The N-terminal stretch at 1 to 27 is a signal peptide; that stretch reads MEANKSMVKLVAFLIILVSSCFQSLTA. Residues 28-48 constitute a propeptide that is removed on maturation; it reads QDLEIEVSDGLNVLQVHDVSQ.

The protein belongs to the protease inhibitor I13 (potato type I serine protease inhibitor) family.

It is found in the secreted. This chain is Ethylene-responsive proteinase inhibitor 1, found in Solanum lycopersicum (Tomato).